We begin with the raw amino-acid sequence, 339 residues long: MKIVIDLMGADHGVLPIIEGVSRALENKSFGAVLVGDKDKATPFISKELASKVEMIHTQDYIKMEEAATEAIKRKESSIYLGMDILKNGADALISAGHSGATMGLATLRLGRIKGVERPAICTLMPSVGKRPSVLLDAGANTDCKPEYLIDFALMGYEYAKSVLGYDSPKVGLLSNGEEDIKGNMLVKETHKMLKAYDFFYGNVEGSDIFKGLVDVVVCDGFMGNVVLKTTEGVASAIGSIFKDEIKSCLKSKIGALMLKNAFDTLRQKTDYAEYGGAPLLGVNKSVIISHGKSNARAIECAIYQAISTVKSQVCLRITKAFESLKPSASTHQSDQQDA.

It belongs to the PlsX family. Homodimer. Probably interacts with PlsY.

It localises to the cytoplasm. It carries out the reaction a fatty acyl-[ACP] + phosphate = an acyl phosphate + holo-[ACP]. It functions in the pathway lipid metabolism; phospholipid metabolism. In terms of biological role, catalyzes the reversible formation of acyl-phosphate (acyl-PO(4)) from acyl-[acyl-carrier-protein] (acyl-ACP). This enzyme utilizes acyl-ACP as fatty acyl donor, but not acyl-CoA. This chain is Phosphate acyltransferase, found in Helicobacter acinonychis (strain Sheeba).